The sequence spans 99 residues: Protein adenylyltransferase MntA (99 aa).

The GSX(10)DXD motif signature appears at 33–47 (GSYVRGEAKEDSDVD). Catalysis depends on residues Asp-45 and Asp-47. Mg(2+)-binding residues include Asp-45, Asp-47, and Asp-77.

This sequence belongs to the MntA antitoxin family. Requires Mg(2+) as cofactor.

The enzyme catalyses L-tyrosyl-[protein] + ATP = O-(5'-adenylyl)-L-tyrosyl-[protein] + diphosphate. The catalysed reaction is O-(5'-adenylyl)-L-tyrosyl-[protein] + ATP = O-[5'-(adenylyl-(5'-&gt;3')-adenylyl)]-L-tyrosyl-[protein] + diphosphate. In terms of biological role, antitoxin component of a type VII toxin-antitoxin (TA) system. Overexpression in E.coli neutralizes the toxic effect of cognate toxin HepT. Neutralization is mostly due to AMPylation of the toxin by this enzyme. The polypeptide is Protein adenylyltransferase MntA (Thermococcus cleftensis (strain DSM 27260 / KACC 17922 / CL1)).